A 409-amino-acid polypeptide reads, in one-letter code: SPI-1 type 3 secretion system translocon protein SctB (409 aa).

Residues 119 to 140 traverse the membrane as a helical segment; that stretch reads ISGMSSSAVALLAAANTLMLTL.

Belongs to the SctB/SipC family. The core secretion machinery of the T3SS is composed of approximately 20 different proteins, including cytoplasmic components, a base, an export apparatus and a needle. This subunit is involved in the formation of a pore, called the translocon, in host membrane.

The protein resides in the secreted. It is found in the host membrane. In terms of biological role, component of the type III secretion system 1 (SPI-1 T3SS), also called injectisome, which is used to inject bacterial effector proteins into eukaryotic host cells. SipB/SctE1 and SipC/SctB1 are inserted into the host membrane where they form a pore and allow the translocation of effector proteins into the cytosol of target cells. The polypeptide is SPI-1 type 3 secretion system translocon protein SctB (Salmonella typhimurium (strain 14028s / SGSC 2262)).